The primary structure comprises 431 residues: Protein translocase subunit SecY (431 aa).

Residues 1–17 are Cytoplasmic-facing; it reads MFKTISNFMRVSDIRNK. A helical membrane pass occupies residues 18–38; sequence IIFTLLMLIVFRIGAFIPVPY. The Extracellular portion of the chain corresponds to 39–66; sequence VNAEALQAQSQMGVFDLLNTFGGGALYQ. The helical transmembrane segment at 67–87 threads the bilayer; the sequence is FSIFAMGITPYITASIIIQLL. Residues 88–115 are Cytoplasmic-facing; it reads QMDVVPKFTEWSKQGEVGRRKLAQFTRY. The chain crosses the membrane as a helical span at residues 116 to 136; the sequence is FTIVLGFIQALGMSYGFNNLA. Topologically, residues 137-145 are extracellular; sequence NGMLIEKSG. The helical transmembrane segment at 146–166 threads the bilayer; the sequence is VSTYLIIALVLTGGTAFLMWL. Over 167-177 the chain is Cytoplasmic; the sequence is GEQITSHGVGN. Residues 178-198 traverse the membrane as a helical segment; that stretch reads GISIIIFAGIVSSIPKTIGQI. Over 199–213 the chain is Extracellular; that stretch reads YETQFVGSNDQLFIH. A helical transmembrane segment spans residues 214–234; that stretch reads IVKVALLVIAILAVIVGVIFI. Residues 235–261 are Cytoplasmic-facing; that stretch reads QQAVRKIAIQYAKGTGRSPAGGGQSTH. Residues 262–282 traverse the membrane as a helical segment; it reads LPLKVNPAGVIPVIFAVAFLI. Over 283–308 the chain is Extracellular; it reads TPRTIASFFGTNDVTKWIQNNFDNTH. The helical transmembrane segment at 309–329 threads the bilayer; the sequence is PVGMAIYVALIIAFTYFYAFV. The Cytoplasmic portion of the chain corresponds to 330–368; the sequence is QVNPEQMADNLKKQGGYIPGVRPGKMTQDRITSILYRLT. 2 helical membrane passes run 369–389 and 390–410; these read FVGSIFLAVISILPIFFIQFA and GLPQSAQIGGTSLLIVVGVAL. The Cytoplasmic portion of the chain corresponds to 411–431; it reads ETMKQLESQLVKRNYRGFMKN.

This sequence belongs to the SecY/SEC61-alpha family. As to quaternary structure, component of the Sec protein translocase complex. Heterotrimer consisting of SecY, SecE and SecG subunits. The heterotrimers can form oligomers, although 1 heterotrimer is thought to be able to translocate proteins. Interacts with the ribosome. Interacts with SecDF, and other proteins may be involved. Interacts with SecA. Interacts with FloT.

It localises to the cell membrane. The protein resides in the membrane raft. Functionally, the central subunit of the protein translocation channel SecYEG. Consists of two halves formed by TMs 1-5 and 6-10. These two domains form a lateral gate at the front which open onto the bilayer between TMs 2 and 7, and are clamped together by SecE at the back. The channel is closed by both a pore ring composed of hydrophobic SecY resides and a short helix (helix 2A) on the extracellular side of the membrane which forms a plug. The plug probably moves laterally to allow the channel to open. The ring and the pore may move independently. The protein is Protein translocase subunit SecY of Bacillus subtilis (strain 168).